Consider the following 996-residue polypeptide: NACHT, LRR and PYD domains-containing protein 9 (996 aa).

The Pyrin domain occupies 1 to 94; it reads MAESFFSDFG…WRKARNEIRQ (94 aa). The NACHT domain maps to 150–469; sequence PTVVLHGPEG…FYMFTRPKDP (320 aa). 156–163 is a binding site for ATP; the sequence is GPEGIGKT. LRR repeat units follow at residues 748-769, 777-798, 805-825, 834-855, 862-883, and 891-914; these read KLNLLSLCENALKDDGVLVLCE, ALEALLLSHCCFSSAACDHLSQ, SLTFLDLGSNVLKDEGVTTLC, NLQELWLMNCYFTSVCCVDIAT, KLKTLKLGNNKIYDAGAKQLCK, and KLENLGLEACELSPASCEDLASAL.

Belongs to the NLRP family. Sensor component of NLRP9 inflammasomes. Inflammasomes are supramolecular complexes that assemble in the cytosol in response to pathogens, such as rotavirus, and play critical roles in innate immunity and inflammation. The core of NLRP9 inflammasomes consists of a signal sensor component (NLRP9), an adapter (ASC/PYCARD), which recruits an effector pro-inflammatory caspase (CASP1). Within the complex, NLRP9 and PYCARD interact via their respective DAPIN/pyrin domains. This interaction initiates speck formation (nucleation) which greatly enhances further addition of soluble PYCARD molecules to the speck in a prion-like polymerization process. Clustered PYCARD nucleates the formation of CASP1 filaments through the interaction of their respective CARD domains, acting as a platform for CASP1 polymerization. CASP1 filament formation increases local enzyme concentration, resulting in trans-autocleavage and activation. Active CASP1 then processes IL1B and IL18 precursors, leading to the release of mature cytokines in the extracellular milieu and inflammatory response. Interacts with DHX9 upon rotavirus infection; this interaction may trigger inflammasome activation and inflammatory response. As to expression, detected exclusively in testis and ovary, and at high level in the oocyte from antral follicles.

It is found in the cytoplasm. It localises to the inflammasome. Its function is as follows. As the sensor component of the NLRP9 inflammasome, plays a crucial role in innate immunity and inflammation. In response to pathogens, including rotavirus, initiates the formation of the inflammasome polymeric complex, made of NLRP9, PYCARD and CASP1. Recruitment of proCASP1 to the inflammasome promotes its activation and CASP1-catalyzed IL1B and IL18 maturation and release in the extracellular milieu. The active cytokines stimulate inflammatory responses. Inflammasomes can also induce pyroptosis, an inflammatory form of programmed cell death. NLRP9 inflammasome activation may be initiated by DHX9 interaction with viral double-stranded RNA (dsRNA), preferentially to short dsRNA segments. This is NACHT, LRR and PYD domains-containing protein 9 (NLRP9) from Bos taurus (Bovine).